A 212-amino-acid polypeptide reads, in one-letter code: uncharacterized protein (212 aa).

Residues glycine 53, glutamate 74, and aspartate 97 each coordinate S-adenosyl-L-methionine.

This sequence belongs to the methyltransferase superfamily. YrrT family.

In terms of biological role, could be a S-adenosyl-L-methionine-dependent methyltransferase. This is an uncharacterized protein from Bacillus cereus (strain ATCC 14579 / DSM 31 / CCUG 7414 / JCM 2152 / NBRC 15305 / NCIMB 9373 / NCTC 2599 / NRRL B-3711).